Here is a 344-residue protein sequence, read N- to C-terminus: Biotin synthase (344 aa).

A Radical SAM core domain is found at 40 to 267 (AQVQVSTLLS…KSMVRLSAGR (228 aa)). [4Fe-4S] cluster-binding residues include Cys55, Cys59, and Cys62. [2Fe-2S] cluster contacts are provided by Cys99, Cys130, Cys190, and Arg262.

This sequence belongs to the radical SAM superfamily. Biotin synthase family. As to quaternary structure, homodimer. Requires [4Fe-4S] cluster as cofactor. [2Fe-2S] cluster is required as a cofactor.

It carries out the reaction (4R,5S)-dethiobiotin + (sulfur carrier)-SH + 2 reduced [2Fe-2S]-[ferredoxin] + 2 S-adenosyl-L-methionine = (sulfur carrier)-H + biotin + 2 5'-deoxyadenosine + 2 L-methionine + 2 oxidized [2Fe-2S]-[ferredoxin]. It functions in the pathway cofactor biosynthesis; biotin biosynthesis; biotin from 7,8-diaminononanoate: step 2/2. Functionally, catalyzes the conversion of dethiobiotin (DTB) to biotin by the insertion of a sulfur atom into dethiobiotin via a radical-based mechanism. The polypeptide is Biotin synthase (Xanthomonas axonopodis pv. citri (strain 306)).